A 461-amino-acid chain; its full sequence is MQYALTVIFQSILFVQCQVGEAAFVISQEHEVSKSISINMTLFPSIKWIIHKSFYLYLTYFVMSQQTLPCFQAADSYNYSHSLPKVQFARFSKYTPQSISYSSTQMYQQKEYSDHITEMTNVHKSRKRKLMVTEDQWGSQITIPKVIQNRPLIEKWFVQKRFKMVKVRNIQRPQLSYQLLSALTCLNSPDGMISTTEIYSFILHHWRYYRYANENWKNSVRHVLCKCQLFDVLQVEGLSRKGNVYKLKRPDNVEKEMIDVKTLGCMQKDSRGIDFYIKMLAGQIGLPRHLFYSIVGNEMPEYAGPENSAIFYHLLSMRKIIPKLETRYFLEHWQMEHKATEPMFFEEFVPYSTSLVSCVENISSYGEGVGPGNDELYDLSDRQIICFHKNIRAYHSLQKRCHKMNYSNWMTPSLIYVQEAVMDKEIVEDDIRNGTIECEGVARKEEAKKNFQDPALISIYN.

A DNA-binding region (fork-head) is located at residues 171-262 (QRPQLSYQLL…VEKEMIDVKT (92 aa)).

The protein localises to the nucleus. Functionally, transcription factor. Binds to DNA sequence motif 5'-CTGTTTCA-3'. Regulates expression of a class of small RNAs, known as 21U-RNAs, perhaps acting redundantly with fkh-4 and fkh-3. This is Putative forkhead-related transcription factor fkh-5 (fkh-5) from Caenorhabditis elegans.